A 1372-amino-acid polypeptide reads, in one-letter code: MAYSYTEKKRIRKSFAELPTVMDIPYLLSIQVDSYEQFLQEHKKPKARENTGLQAAYSSIFPIESHSGNAELQFVEYYLGTPEFDERECILRGSTFAAPMRVKIRLIIKDKDSKDKDSKAAIKDIREQSVYMGEMPLMTANGTFIINGTERVIVSQLHRSPGVFFDHDKGKSHSSGKVLYNARIIPYRGSWLDFEFDAKDLVFARIDRRRKLLASIILRALGLSTSEILDLFFDKVKVYKGEEQFEIDLVADRLRGEMAQFDIVTPEGDVVVEQGKRINARRIRQLEEAGMTKISIPDEYLYERILAEDIIVNDEVIARANTLIDHELLVKLSAFEASESIKEFSILFTNDIDQGSYIADTLRADSTSSREEALIEIYKVMRPGEPPTVETAEKLFDSMFFNADRYDLSNVGRMKFNRRLGLDFVDTDDADIQRERSVLTNADIVNVLKELIEIRNGRGEVDDIDHLGNRRIRSVGEMAENQFRVGLVRVERAVKERLSSAESDNLSPQDLINSKPVAAAVKEFFGSSQLSQFMDQNNPLSEVTHKRRVSALGPGGLTRERAGFEVRDVHDTHYGRVCPIETPEGPNIGLINSLATFAKTNSFGFLETPYRRVVDGKVTDVIEYLSAIEEVGTVIAQADSPVTADGALSDEMVSVRSYGEFVRMPPEKVTHMDVSPSQVVSVAAGLIPFLEHDDANRALMGSNMQRQAVPTLRADKPLVGTGMERHVARDSGVCVIAKRGGVIEDVDASRIVVRVNEAEMIAGEAGIDIYNLVKYTRSNQNTCINQRIIVNQGDEIAFGDILADGPSTDLGELALGQNIRIAFMPWNGYNFEDSILLSEKVVKEDRFTTIHIQELTCVARDTKLGTEEITADIPNVGEAALSSLDEAGIVYIGAEVDAGDILVGKVTPKGETQLTPEEKLLRAIFGEKAADVKDTSLRVPTSSKGTVIDVQVFTRDGVEKDARARAIEKSQLDSYRKDLKEELRIFEEAARGRIGNLLDGQKVSGGSGLKAGTIMALADMKDMSLETLLDIQPVEEEISERLTQIAEYLVDKQKDIDVKFAEKKRKLTAGDDLQHGVQKIVKVYLAVKRRIQPGDKMAGRHGNKGVVSRIMPVEDMPYDEHGNTVDIVLNPLGVPSRMNIGQVLETHLGMAAKGLGEKIDGMLKSQAAIKDLREFLDKIYNQVGGEQVDLDSLTDDDIMALADNLRAGVPMGTAVFDGAKESQVKDLLELAGMDRDGQQTLYDGRTGQKFDRKVTVGYMYMLKLNHLVDDKMHARSTGSYSLVTQQPLGGKAQFGGQRFGEMEVWALEAYGATYTLQEMLTVKSDDVEGRTRMYKNIVDGEQYMDPGMPESFNVLTKEIKSLGINIELKQTH.

This sequence belongs to the RNA polymerase beta chain family. In terms of assembly, the RNAP catalytic core consists of 2 alpha, 1 beta, 1 beta' and 1 omega subunit. When a sigma factor is associated with the core the holoenzyme is formed, which can initiate transcription.

It catalyses the reaction RNA(n) + a ribonucleoside 5'-triphosphate = RNA(n+1) + diphosphate. Functionally, DNA-dependent RNA polymerase catalyzes the transcription of DNA into RNA using the four ribonucleoside triphosphates as substrates. This chain is DNA-directed RNA polymerase subunit beta, found in Psychrobacter arcticus (strain DSM 17307 / VKM B-2377 / 273-4).